The sequence spans 148 residues: Meiosis inducing protein mei3 (148 aa).

Over residues 1 to 20 (MSSQNTSNSRHPASSASALP) the composition is skewed to polar residues. The disordered stretch occupies residues 1–96 (MSSQNTSNSR…AQRIEHENKE (96 aa)). Residues 21–46 (NRTNTARRSTSPRTSTGSSSTNTNTK) are compositionally biased toward low complexity. Residues 75 to 86 (PMKRTKRVRRTP) show a composition bias toward basic residues.

Functionally, acts as a critical meiotic inducer by binding non-covalently to protein kinase ran1/pat1 inhibiting its enzymatic activity. Inhibits ran1/pat1 by acting as a pseudosubstrate for ran1/pat1 instead of its natural substrate ste11. Inactivation of the ran1/pat1 protein kinase is both necessary and sufficient to divert a vegetative cell from mitotic division to meiotic differentiation. The polypeptide is Meiosis inducing protein mei3 (Schizosaccharomyces pombe (strain 972 / ATCC 24843) (Fission yeast)).